The primary structure comprises 189 residues: MSETTETKFTPRFKTKYQETVAPALQEQFGYANVMEMPRVVKVVVNMGLGEAAKDSKLVDNAIKDLTAITGQKPVINRAKKSIAQFKLREGMPIGAHVTMRGDRMWEFLDRLVTLALPRIRDFRGLSDRHFDGNGNYTFGLTEQSMFHEIDQDKIDRVRGMDITVVTSAKTDDEGRALLKALGFPFKTN.

The protein belongs to the universal ribosomal protein uL5 family. In terms of assembly, part of the 50S ribosomal subunit; part of the 5S rRNA/L5/L18/L25 subcomplex. Contacts the 5S rRNA and the P site tRNA. Forms a bridge to the 30S subunit in the 70S ribosome.

Its function is as follows. This is one of the proteins that bind and probably mediate the attachment of the 5S RNA into the large ribosomal subunit, where it forms part of the central protuberance. In the 70S ribosome it contacts protein S13 of the 30S subunit (bridge B1b), connecting the 2 subunits; this bridge is implicated in subunit movement. Contacts the P site tRNA; the 5S rRNA and some of its associated proteins might help stabilize positioning of ribosome-bound tRNAs. The chain is Large ribosomal subunit protein uL5 from Kocuria rhizophila (strain ATCC 9341 / DSM 348 / NBRC 103217 / DC2201).